The chain runs to 328 residues: Protein FAM76B (328 aa).

Residues lysine 143 to threonine 232 are disordered. Positions glycine 148–leucine 159 are enriched in low complexity. Over residues glutamine 165–isoleucine 183 the composition is skewed to basic residues. Positions glycine 185 to glutamine 201 are enriched in polar residues. Position 188 is a phosphoserine (serine 188). The segment covering glutamate 203–threonine 213 has biased composition (basic and acidic residues). Polar residues predominate over residues serine 216 to threonine 232. Residues leucine 237–lysine 316 adopt a coiled-coil conformation.

It belongs to the FAM76 family. Highly expressed in hematopoietic and immune systems including in the thymus, spleen, kidney, and blood vessel.

Functionally, plays a role in hematopoiesis and immune system development, and participates in the inflammatory response. The chain is Protein FAM76B (fam76b) from Danio rerio (Zebrafish).